We begin with the raw amino-acid sequence, 124 residues long: Kalata-B1 (124 aa).

A signal peptide spans 1–22; the sequence is MAKFTVCLLLCLLLAAFVGAFG. Positions 23 to 88 are excised as a propeptide; that stretch reads SELSDSHKTT…QVFLKQLQLK (66 aa). Positions 89–117 form a cross-link, cyclopeptide (Gly-Asn); the sequence is GLPVCGETCVGGTCNTPGCTCSWPVCTRN. 3 disulfides stabilise this stretch: Cys93/Cys107, Cys97/Cys109, and Cys102/Cys114. A propeptide spanning residues 118–124 is cleaved from the precursor; that stretch reads GLPSLAA.

The protein belongs to the cyclotide family. Moebius subfamily. In terms of processing, kalata-B1 is a cyclic peptide which occurs in three forms: with unmodified Trp-111, with Trp-111 oxidized to form oxindolylalanine and with Trp-111 oxidized to form N-formylkynurenine. Oxidation is enhanced by exposure to sunlight. Leaves and stems. Lower in roots.

Functionally, probably participates in a plant defense mechanism. Has antibiotic activity. Has a diuretic effect. Has a uterotonic effect in humans. Active against the Gram-positive S.aureus with a minimum inhibition concentration of approximately 0.2 microM. Relatively ineffective against Gram-negative bacteria such as E.coli and P.aeruginosa. Inhibitory effect on the growth and development of larvae from H.punctigera. The unmodified form has hemolytic activity, the oxidized form lacks hemolytic activity. If the protein is linearized, hemolytic activity is lost. The polypeptide is Kalata-B1 (OAK1) (Oldenlandia affinis).